A 486-amino-acid polypeptide reads, in one-letter code: Cardiolipin synthase A (486 aa).

2 helical membrane-spanning segments follow: residues 3–23 (TFYT…IAGV) and 38–58 (MAWL…YLSV). PLD phosphodiesterase domains are found at residues 219-246 (MDLR…VDPR) and 399-426 (EGGL…DMRS). Active-site residues include histidine 224, lysine 226, aspartate 231, histidine 404, lysine 406, and aspartate 411.

Belongs to the phospholipase D family. Cardiolipin synthase subfamily. ClsA sub-subfamily.

The protein resides in the cell inner membrane. It catalyses the reaction 2 a 1,2-diacyl-sn-glycero-3-phospho-(1'-sn-glycerol) = a cardiolipin + glycerol. Its function is as follows. Catalyzes the reversible phosphatidyl group transfer from one phosphatidylglycerol molecule to another to form cardiolipin (CL) (diphosphatidylglycerol) and glycerol. This is Cardiolipin synthase A from Salmonella paratyphi A (strain ATCC 9150 / SARB42).